Reading from the N-terminus, the 362-residue chain is Serpentine receptor class epsilon-37 (362 aa).

The next 7 membrane-spanning stretches (helical) occupy residues 29 to 49 (IFYV…YILV), 67 to 87 (IMMC…IVLI), 127 to 147 (IYFA…AVLA), 170 to 190 (IPIL…YQTT), 204 to 224 (IFIG…NLAW), 260 to 280 (LVVS…VLLF), and 288 to 308 (FFVH…SLTL).

Belongs to the nematode receptor-like protein sre family.

The protein localises to the membrane. The chain is Serpentine receptor class epsilon-37 (sre-37) from Caenorhabditis elegans.